A 488-amino-acid chain; its full sequence is Aspartyl/glutamyl-tRNA(Asn/Gln) amidotransferase subunit B (488 aa).

Belongs to the GatB/GatE family. GatB subfamily. As to quaternary structure, heterotrimer of A, B and C subunits.

It catalyses the reaction L-glutamyl-tRNA(Gln) + L-glutamine + ATP + H2O = L-glutaminyl-tRNA(Gln) + L-glutamate + ADP + phosphate + H(+). The catalysed reaction is L-aspartyl-tRNA(Asn) + L-glutamine + ATP + H2O = L-asparaginyl-tRNA(Asn) + L-glutamate + ADP + phosphate + 2 H(+). Allows the formation of correctly charged Asn-tRNA(Asn) or Gln-tRNA(Gln) through the transamidation of misacylated Asp-tRNA(Asn) or Glu-tRNA(Gln) in organisms which lack either or both of asparaginyl-tRNA or glutaminyl-tRNA synthetases. The reaction takes place in the presence of glutamine and ATP through an activated phospho-Asp-tRNA(Asn) or phospho-Glu-tRNA(Gln). The protein is Aspartyl/glutamyl-tRNA(Asn/Gln) amidotransferase subunit B of Ralstonia pickettii (strain 12J).